A 245-amino-acid chain; its full sequence is Ubiquinone/menaquinone biosynthesis C-methyltransferase UbiE (245 aa).

Residues Thr71, Asp92, and 118-119 (DA) contribute to the S-adenosyl-L-methionine site.

It belongs to the class I-like SAM-binding methyltransferase superfamily. MenG/UbiE family.

It catalyses the reaction a 2-demethylmenaquinol + S-adenosyl-L-methionine = a menaquinol + S-adenosyl-L-homocysteine + H(+). The enzyme catalyses a 2-methoxy-6-(all-trans-polyprenyl)benzene-1,4-diol + S-adenosyl-L-methionine = a 5-methoxy-2-methyl-3-(all-trans-polyprenyl)benzene-1,4-diol + S-adenosyl-L-homocysteine + H(+). Its pathway is quinol/quinone metabolism; menaquinone biosynthesis; menaquinol from 1,4-dihydroxy-2-naphthoate: step 2/2. It functions in the pathway cofactor biosynthesis; ubiquinone biosynthesis. Its function is as follows. Methyltransferase required for the conversion of demethylmenaquinol (DMKH2) to menaquinol (MKH2) and the conversion of 2-polyprenyl-6-methoxy-1,4-benzoquinol (DDMQH2) to 2-polyprenyl-3-methyl-6-methoxy-1,4-benzoquinol (DMQH2). The polypeptide is Ubiquinone/menaquinone biosynthesis C-methyltransferase UbiE (Neisseria gonorrhoeae (strain ATCC 700825 / FA 1090)).